Reading from the N-terminus, the 233-residue chain is Type II methyltransferase M.MunI (233 aa).

The protein belongs to the MT-A70-like family.

The enzyme catalyses a 2'-deoxyadenosine in DNA + S-adenosyl-L-methionine = an N(6)-methyl-2'-deoxyadenosine in DNA + S-adenosyl-L-homocysteine + H(+). Functionally, a methylase that recognizes the double-stranded sequence 5'-CAATTG-3', methylates A-3 on both strands, and protects the DNA from cleavage by the MunI endonuclease. This Mycoplasma sp protein is Type II methyltransferase M.MunI.